A 357-amino-acid chain; its full sequence is Transcription factor unc-86 (357 aa).

The POU-IV box motif lies at 35 to 44 (RAAQVALADI). The POU-specific domain maps to 155–232 (DMDTDPRQLE…ILHSWLEKAE (78 aa)). The homeobox DNA-binding region spans 253 to 312 (KKRKRTSIAAPEKRELEQFFKQQPRPSGERIASIADRLDLKKNVVRVWFCNQRQKQKRDF).

It belongs to the POU transcription factor family. Class-4 subfamily. Interacts with mec-3; the heterooligomer binds to the promoters of mec-3, mec-4 and mec-7. As to expression, specific to neurons and neuroblasts. Expressed in CEM head neurons and in IL2, URA, URB, URX and URY neurons. Not expressed in olfactory sensory neurons but expressed in AIZ interneurons.

It is found in the nucleus. Transcription factor required for correct cell fate determination and differentiation in diverse neuronal cell lineages where it plays a role in specifying the fate of daughter cells during cell divisions. Involved in sensory neuron production and function. Binds both alone and with mec-3 to the mec-3 promoter to initiate and maintain mec-3 expression which is required for sensory neuron differentiation. In addition, binds both alone and with mec-3 to the promoters of mec-4 and mec-7 which act to regulate sensory neuron function. Involved in determining the identity of the serotonergic NSM neurons and the cholinergic IL2 sensory and URA motor neurons. Promotes expression of the cfi-1 transcription factor in the URA and IL2 neurons which in turn activates normal URA and IL2 gene expression. Required to determine the identity of BDU sensory neurons in concert with transcription factor unc-86, regulating expression of a number of genes, including transcription factors ceh-14 and ahr-1, neuropeptides flp-10, nlp-1 and nlp-15, and tyramine receptor-encoding ser-2. Regulates expression of a number of genes in NSM neurons including bas-1, cat-1, dop-3, mgl-3, nlp-13, scd-2 and ptps-1. In the IL2 neurons, required for expression of cho-1, gcy-19, klp-6, lag-2, unc-5 and unc-17. Promotes expression of pkd-2 in the male-specific CEM head neurons. Required for dauer-specific branching of IL2Q neurons and nictation behavior. Controls both the timing and direction of axon outgrowth in HSN neurons. Plays a role in serotonin production by regulating expression of the tryptophan hydrolase tph-1 which catalyzes serotonin synthesis, in the AIM, NSM, HSN and RIH neurons. Involved in regulation of lin-11 expression in the AIZ interneurons, the major interneurons of the olfactory pathway, and is required for odortaxis behavior. Involved in neurite pruning between AIM neurons during larval development by regulating the expression of transcription factor mbr-1. Required for correct localization of unc-40. In Caenorhabditis elegans, this protein is Transcription factor unc-86 (unc-86).